The chain runs to 374 residues: UDP-N-acetylglucosamine--N-acetylmuramyl-(pentapeptide) pyrophosphoryl-undecaprenol N-acetylglucosamine transferase (374 aa).

Residues 13–15, Asn124, Arg165, Ser193, and Gln294 each bind UDP-N-acetyl-alpha-D-glucosamine; that span reads TGG.

Belongs to the glycosyltransferase 28 family. MurG subfamily.

The protein resides in the cell inner membrane. It catalyses the reaction di-trans,octa-cis-undecaprenyl diphospho-N-acetyl-alpha-D-muramoyl-L-alanyl-D-glutamyl-meso-2,6-diaminopimeloyl-D-alanyl-D-alanine + UDP-N-acetyl-alpha-D-glucosamine = di-trans,octa-cis-undecaprenyl diphospho-[N-acetyl-alpha-D-glucosaminyl-(1-&gt;4)]-N-acetyl-alpha-D-muramoyl-L-alanyl-D-glutamyl-meso-2,6-diaminopimeloyl-D-alanyl-D-alanine + UDP + H(+). It functions in the pathway cell wall biogenesis; peptidoglycan biosynthesis. Cell wall formation. Catalyzes the transfer of a GlcNAc subunit on undecaprenyl-pyrophosphoryl-MurNAc-pentapeptide (lipid intermediate I) to form undecaprenyl-pyrophosphoryl-MurNAc-(pentapeptide)GlcNAc (lipid intermediate II). The polypeptide is UDP-N-acetylglucosamine--N-acetylmuramyl-(pentapeptide) pyrophosphoryl-undecaprenol N-acetylglucosamine transferase (Sinorhizobium medicae (strain WSM419) (Ensifer medicae)).